The primary structure comprises 541 residues: MPGLRRDRLLTLLLLGALLSADLYFHLWPQVQRQLRPRERPRGCPCTGRASSLARDSAAAASDPGTIVHNFSRTEPRTEPAGGSHSGSSSKLQALFAHPLYNVPEEPPLLGAEDSLLASQEALRYYRRKVARWNRRHKMYREQMNLTSLDPPLQLRLEASWVQFHLGINRHGLYSRSSPVVSKLLQDMRHFPTISADYSQDEKALLGACDCTQIVKPSGVHLKLVLRFSDFGKAMFKPMRQQRDEETPVDFFYFIDFQRHNAEIAAFHLDRILDFRRVPPTVGRIVNVTKEILEVTKNEILQSVFFVSPASNVCFFAKCPYMCKTEYAVCGNPHLLEGSLSAFLPSLNLAPRLSVPNPWIRSYTLAGKEEWEVNPLYCDTVKQIYPYNNSQRLLNVIDMAIFDFLIGNMDRHHYEMFTKFGDDGFLIHLDNARGFGRHSHDEISILSPLSQCCMIKKKTLLHLQLLAQADYRLSDVMRESLLEDQLSPVLTEPHLLALDRRLQTILRTVEGCIVAHGQQSVIVDGPVEQLAPDSGQANLTS.

A signal peptide spans methionine 1–arginine 33. The segment at arginine 38–serine 90 is disordered. A compositionally biased stretch (low complexity) spans arginine 49–aspartate 63. N-linked (GlcNAc...) asparagine glycans are attached at residues asparagine 70, asparagine 145, and asparagine 287. Intrachain disulfides connect cysteine 314/cysteine 330, cysteine 319/cysteine 323, cysteine 378/cysteine 452, and cysteine 453/cysteine 512. Asparagine 388 carries N-linked (GlcNAc...) asparagine glycosylation. The N-linked (GlcNAc...) asparagine glycan is linked to asparagine 538.

Belongs to the FAM20 family. In terms of assembly, interacts with FAM20C; probably forming a heterotetramer of 2 subunits of FAM20A and 2 subunits of FAM20C. N-glycosylated. Highly expressed in lung and liver. Intermediate levels in thymus and ovary.

The protein localises to the secreted. It is found in the golgi apparatus. Its subcellular location is the endoplasmic reticulum. In terms of biological role, pseudokinase that acts as an allosteric activator of the Golgi serine/threonine protein kinase FAM20C and is involved in biomineralization of teeth. Forms a complex with FAM20C and increases the ability of FAM20C to phosphorylate the proteins that form the 'matrix' that guides the deposition of the enamel minerals. The protein is Pseudokinase FAM20A of Homo sapiens (Human).